Consider the following 901-residue polypeptide: Valine--tRNA ligase (901 aa).

The 'KMSKS' region signature appears at 536 to 540; that stretch reads KLSKS. Lys-539 is an ATP binding site. Residues 831–901 adopt a coiled-coil conformation; that stretch reads LEGLISFEKE…KLQGNLEVLS (71 aa).

Belongs to the class-I aminoacyl-tRNA synthetase family. ValS type 1 subfamily. As to quaternary structure, monomer.

The protein resides in the cytoplasm. It carries out the reaction tRNA(Val) + L-valine + ATP = L-valyl-tRNA(Val) + AMP + diphosphate. In terms of biological role, catalyzes the attachment of valine to tRNA(Val). As ValRS can inadvertently accommodate and process structurally similar amino acids such as threonine, to avoid such errors, it has a 'posttransfer' editing activity that hydrolyzes mischarged Thr-tRNA(Val) in a tRNA-dependent manner. This chain is Valine--tRNA ligase, found in Chlorobaculum tepidum (strain ATCC 49652 / DSM 12025 / NBRC 103806 / TLS) (Chlorobium tepidum).